We begin with the raw amino-acid sequence, 222 residues long: Peptide methionine sulfoxide reductase MsrA (222 aa).

Residue cysteine 54 is part of the active site.

The protein belongs to the MsrA Met sulfoxide reductase family.

It catalyses the reaction L-methionyl-[protein] + [thioredoxin]-disulfide + H2O = L-methionyl-(S)-S-oxide-[protein] + [thioredoxin]-dithiol. It carries out the reaction [thioredoxin]-disulfide + L-methionine + H2O = L-methionine (S)-S-oxide + [thioredoxin]-dithiol. Functionally, has an important function as a repair enzyme for proteins that have been inactivated by oxidation. Catalyzes the reversible oxidation-reduction of methionine sulfoxide in proteins to methionine. In Methylococcus capsulatus (strain ATCC 33009 / NCIMB 11132 / Bath), this protein is Peptide methionine sulfoxide reductase MsrA.